We begin with the raw amino-acid sequence, 276 residues long: Diaminopimelate epimerase (276 aa).

Residues Asn13, Gln46, and Asn66 each coordinate substrate. Catalysis depends on Cys75, which acts as the Proton donor. Substrate contacts are provided by residues 76–77 (GN), Asn159, Asn192, and 210–211 (ER). The active-site Proton acceptor is the Cys219. 220-221 (GT) contributes to the substrate binding site.

Belongs to the diaminopimelate epimerase family. In terms of assembly, homodimer.

It localises to the cytoplasm. The enzyme catalyses (2S,6S)-2,6-diaminopimelate = meso-2,6-diaminopimelate. It functions in the pathway amino-acid biosynthesis; L-lysine biosynthesis via DAP pathway; DL-2,6-diaminopimelate from LL-2,6-diaminopimelate: step 1/1. Functionally, catalyzes the stereoinversion of LL-2,6-diaminopimelate (L,L-DAP) to meso-diaminopimelate (meso-DAP), a precursor of L-lysine and an essential component of the bacterial peptidoglycan. This is Diaminopimelate epimerase from Pseudomonas putida (strain GB-1).